Consider the following 308-residue polypeptide: Transmembrane and ubiquitin-like domain-containing protein 1 (308 aa).

The helical transmembrane segment at 11 to 31 threads the bilayer; the sequence is VTVLFALVLFFMVLMLAWVST. Residues 39-162 are disordered; the sequence is THWIRPEPAQ…GLGDGTTAQS (124 aa). The span at 63–93 shows a compositional bias: polar residues; sequence PSQTLTNADPNSETVDSSDSTQSSREFQNAG. Residues 103-115 are compositionally biased toward low complexity; that stretch reads SSSGSTVSTGGSV. The span at 132 to 149 shows a compositional bias: polar residues; it reads PNFTVSSRDPQAGASSSL. Residues 169 to 242 form the Ubiquitin-like domain; it reads IHLRLKFLND…LHCHISQHAS (74 aa). The next 2 membrane-spanning stretches (helical) occupy residues 253 to 273 and 283 to 303; these read VPLNVGNLLVPLLFLIVMLLW and FTGTATACLGGFTLLISAIAF.

Its subcellular location is the membrane. The protein resides in the cytoplasm. The protein localises to the nucleus. Its function is as follows. May contribute to the regulation of translation during cell-cycle progression. May contribute to the regulation of cell proliferation. The membrane form is involved in sterol-regulated ubiquitination and degradation of HMG-CoA reductase HMGCR. May be involved in centrosome assembly. This chain is Transmembrane and ubiquitin-like domain-containing protein 1 (tmub1), found in Xenopus laevis (African clawed frog).